The following is a 552-amino-acid chain: MTDGKDLEAEIHPLKSENRKVPENAGALAGKEPRGTPAPQTRLSHCRTAAFFLSLFACLLVVFVVSFIIPCPDRPALQGVWRIDYNAAVAYDFLAAEDVNKDKIQDILFLYKNTNSSRGNSSFSCADEGFSCPCTFVAAVSGASGSVLWERPVAQDRAFVECGILQPRGSAAPSACVVLGRPGSLVAVDTLTGKTLWSQPSSFGGNASVLSPLLRVPDLDADGAPDLLVLIQEENQVNGSIYSGGTGQQVSPPDSLGVDGTSGSILHVTRAGAHYVLIPCGTALCSRSVKGLYEKVSRRDSPLKSDPLWEDMLSAASHRLVVHSSGAIRYLMNVPGKAGDDLLLVSTEAYMLLDGQDLTPRWTFGTTQVLRKPVLGYYKPDTPAVLVENGTGPDRQVLLLDLGSGAVLWSQALPGLPGDPPSASLPTADHRSAFFFWGIHEPTDSNQTEPGAAGRRLYMLHPTLPGVLLELDNVSVPIVAFQVVLLEPGRHAACILLTGPASPSPPGLVSVTKHKVQDLVLAGRVVHLAEGGAESDQAVRDRLSRLRYRSEA.

Topologically, residues 1–48 (MTDGKDLEAEIHPLKSENRKVPENAGALAGKEPRGTPAPQTRLSHCRT) are cytoplasmic. The helical; Signal-anchor for type II membrane protein transmembrane segment at 49 to 69 (AAFFLSLFACLLVVFVVSFII) threads the bilayer. At 70-552 (PCPDRPALQG…LSRLRYRSEA (483 aa)) the chain is on the extracellular side. N-linked (GlcNAc...) asparagine glycosylation is found at asparagine 115, asparagine 238, and asparagine 473.

The protein belongs to the FAM234 family.

Its subcellular location is the membrane. The sequence is that of Protein FAM234A (FAM234A) from Bos taurus (Bovine).